A 63-amino-acid chain; its full sequence is Cytochrome c oxidase subunit 7C, mitochondrial (63 aa).

The transit peptide at 1 to 16 (MLGQSIRRFTTSVVRR) directs the protein to the mitochondrion. Over 17 to 33 (SHYEEGPGKNIPFSVEN) the chain is Mitochondrial matrix. K25 bears the N6-acetyllysine; alternate mark. Position 25 is an N6-succinyllysine; alternate (K25). Residues 34–60 (KWRLLAMMTLFFGSGFAAPFFIVRHQL) traverse the membrane as a helical segment. Residues 61–63 (LKK) are Mitochondrial intermembrane-facing.

It belongs to the cytochrome c oxidase VIIc family. In terms of assembly, component of the cytochrome c oxidase (complex IV, CIV), a multisubunit enzyme composed of 14 subunits. The complex is composed of a catalytic core of 3 subunits MT-CO1, MT-CO2 and MT-CO3, encoded in the mitochondrial DNA, and 11 supernumerary subunits COX4I1 (or COX4I2), COX5A, COX5B, COX6A2 (or COX6A1), COX6B1 (or COX6B2), COX6C, COX7A1 (or COX7A2), COX7B, COX7C, COX8B and NDUFA4, which are encoded in the nuclear genome. The complex exists as a monomer or a dimer and forms supercomplexes (SCs) in the inner mitochondrial membrane with NADH-ubiquinone oxidoreductase (complex I, CI) and ubiquinol-cytochrome c oxidoreductase (cytochrome b-c1 complex, complex III, CIII), resulting in different assemblies (supercomplex SCI(1)III(2)IV(1) and megacomplex MCI(2)III(2)IV(2)). Interacts with RAB5IF. In terms of tissue distribution, liver, heart, muscle and brain, contain the same isoform of COX VIIc, but at different concentrations.

The protein resides in the mitochondrion inner membrane. It functions in the pathway energy metabolism; oxidative phosphorylation. In terms of biological role, component of the cytochrome c oxidase, the last enzyme in the mitochondrial electron transport chain which drives oxidative phosphorylation. The respiratory chain contains 3 multisubunit complexes succinate dehydrogenase (complex II, CII), ubiquinol-cytochrome c oxidoreductase (cytochrome b-c1 complex, complex III, CIII) and cytochrome c oxidase (complex IV, CIV), that cooperate to transfer electrons derived from NADH and succinate to molecular oxygen, creating an electrochemical gradient over the inner membrane that drives transmembrane transport and the ATP synthase. Cytochrome c oxidase is the component of the respiratory chain that catalyzes the reduction of oxygen to water. Electrons originating from reduced cytochrome c in the intermembrane space (IMS) are transferred via the dinuclear copper A center (CU(A)) of subunit 2 and heme A of subunit 1 to the active site in subunit 1, a binuclear center (BNC) formed by heme A3 and copper B (CU(B)). The BNC reduces molecular oxygen to 2 water molecules using 4 electrons from cytochrome c in the IMS and 4 protons from the mitochondrial matrix. This Bos taurus (Bovine) protein is Cytochrome c oxidase subunit 7C, mitochondrial (COX7C).